The sequence spans 487 residues: UDP-N-acetylmuramate--L-alanine ligase (487 aa).

129-135 (GTHGKTT) lines the ATP pocket.

This sequence belongs to the MurCDEF family.

It is found in the cytoplasm. It catalyses the reaction UDP-N-acetyl-alpha-D-muramate + L-alanine + ATP = UDP-N-acetyl-alpha-D-muramoyl-L-alanine + ADP + phosphate + H(+). The protein operates within cell wall biogenesis; peptidoglycan biosynthesis. Its function is as follows. Cell wall formation. This Aliivibrio fischeri (strain ATCC 700601 / ES114) (Vibrio fischeri) protein is UDP-N-acetylmuramate--L-alanine ligase.